Reading from the N-terminus, the 263-residue chain is Energy-coupling factor transporter transmembrane protein EcfT (263 aa).

4 helical membrane-spanning segments follow: residues I22–I42, I69–V89, L105–L125, and T243–F263.

Belongs to the energy-coupling factor EcfT family. In terms of assembly, forms a stable energy-coupling factor (ECF) transporter complex composed of 2 membrane-embedded substrate-binding proteins (S component), 2 ATP-binding proteins (A component) and 2 transmembrane proteins (T component). May be able to interact with more than 1 S component at a time.

It is found in the cell membrane. In terms of biological role, transmembrane (T) component of an energy-coupling factor (ECF) ABC-transporter complex. Unlike classic ABC transporters this ECF transporter provides the energy necessary to transport a number of different substrates. This Exiguobacterium sibiricum (strain DSM 17290 / CCUG 55495 / CIP 109462 / JCM 13490 / 255-15) protein is Energy-coupling factor transporter transmembrane protein EcfT.